The primary structure comprises 116 residues: Ribosome-binding factor A (116 aa).

It belongs to the RbfA family. Monomer. Binds 30S ribosomal subunits, but not 50S ribosomal subunits or 70S ribosomes.

It localises to the cytoplasm. Its function is as follows. One of several proteins that assist in the late maturation steps of the functional core of the 30S ribosomal subunit. Associates with free 30S ribosomal subunits (but not with 30S subunits that are part of 70S ribosomes or polysomes). Required for efficient processing of 16S rRNA. May interact with the 5'-terminal helix region of 16S rRNA. The chain is Ribosome-binding factor A from Malacoplasma penetrans (strain HF-2) (Mycoplasma penetrans).